The following is a 160-amino-acid chain: Protein-export protein SecB (160 aa).

This sequence belongs to the SecB family. In terms of assembly, homotetramer, a dimer of dimers. One homotetramer interacts with 1 SecA dimer.

It is found in the cytoplasm. In terms of biological role, one of the proteins required for the normal export of preproteins out of the cell cytoplasm. It is a molecular chaperone that binds to a subset of precursor proteins, maintaining them in a translocation-competent state. It also specifically binds to its receptor SecA. This Agrobacterium fabrum (strain C58 / ATCC 33970) (Agrobacterium tumefaciens (strain C58)) protein is Protein-export protein SecB.